A 132-amino-acid polypeptide reads, in one-letter code: Phosphoribosyl-AMP cyclohydrolase (132 aa).

Residue aspartate 81 coordinates Mg(2+). Cysteine 82 serves as a coordination point for Zn(2+). 2 residues coordinate Mg(2+): aspartate 83 and aspartate 85. Zn(2+) is bound by residues cysteine 99 and cysteine 106.

Belongs to the PRA-CH family. Homodimer. Mg(2+) is required as a cofactor. It depends on Zn(2+) as a cofactor.

It is found in the cytoplasm. The catalysed reaction is 1-(5-phospho-beta-D-ribosyl)-5'-AMP + H2O = 1-(5-phospho-beta-D-ribosyl)-5-[(5-phospho-beta-D-ribosylamino)methylideneamino]imidazole-4-carboxamide. Its pathway is amino-acid biosynthesis; L-histidine biosynthesis; L-histidine from 5-phospho-alpha-D-ribose 1-diphosphate: step 3/9. In terms of biological role, catalyzes the hydrolysis of the adenine ring of phosphoribosyl-AMP. The protein is Phosphoribosyl-AMP cyclohydrolase of Chromobacterium violaceum (strain ATCC 12472 / DSM 30191 / JCM 1249 / CCUG 213 / NBRC 12614 / NCIMB 9131 / NCTC 9757 / MK).